A 207-amino-acid chain; its full sequence is Small ribosomal subunit protein uS3 (207 aa).

The region spanning 17-86 (IDEYLEKELR…NPQIEVEEIK (70 aa)) is the KH type-2 domain.

The protein belongs to the universal ribosomal protein uS3 family. In terms of assembly, part of the 30S ribosomal subunit.

Binds the lower part of the 30S subunit head. In Thermococcus sibiricus (strain DSM 12597 / MM 739), this protein is Small ribosomal subunit protein uS3.